A 490-amino-acid polypeptide reads, in one-letter code: Homoserine O-acetyltransferase (490 aa).

One can recognise an AB hydrolase-1 domain in the interval 47–353 (NAILVCHALT…SQFGHDAFLI (307 aa)). The active-site Nucleophile is S152. R221 serves as a coordination point for substrate. Residues D315 and H348 contribute to the active site. D349 provides a ligand contact to substrate. CBS domains lie at 375-432 (MNTQ…YTSL) and 436-490 (MSSQ…GRGP).

The protein belongs to the AB hydrolase superfamily. MetX family. In terms of assembly, homodimer.

It localises to the cytoplasm. It carries out the reaction L-homoserine + acetyl-CoA = O-acetyl-L-homoserine + CoA. It functions in the pathway amino-acid biosynthesis; L-methionine biosynthesis via de novo pathway; O-acetyl-L-homoserine from L-homoserine: step 1/1. Functionally, transfers an acetyl group from acetyl-CoA to L-homoserine, forming acetyl-L-homoserine. The protein is Homoserine O-acetyltransferase of Methanosphaerula palustris (strain ATCC BAA-1556 / DSM 19958 / E1-9c).